The chain runs to 172 residues: Peptide deformylase (172 aa).

Fe cation contacts are provided by cysteine 94 and histidine 136. Residue glutamate 137 is part of the active site. Fe cation is bound at residue histidine 140.

The protein belongs to the polypeptide deformylase family. The cofactor is Fe(2+).

The catalysed reaction is N-terminal N-formyl-L-methionyl-[peptide] + H2O = N-terminal L-methionyl-[peptide] + formate. Its function is as follows. Removes the formyl group from the N-terminal Met of newly synthesized proteins. Requires at least a dipeptide for an efficient rate of reaction. N-terminal L-methionine is a prerequisite for activity but the enzyme has broad specificity at other positions. The protein is Peptide deformylase of Pelagibacter ubique (strain HTCC1062).